The sequence spans 520 residues: METWSVEQVCSWLVEKNLGELVHRFQEEEVSGAALLALNDRMVQQLVKKIGHQAVLMDLIKKYKQNTQGLKSPENPKKAALVMQTEAARDYRDEESSSPARHGEQMPSFYPAENLDNGLIDQRVLKQRRNVKQILARSKALQWTKSYVLPEFPYDVKCMLAEQKCPDHSMRIRIIEFLQADMTKYLEGSLYPSTQQYNDVVNALLQAHPFLDEDGCGFFLWKRALKDRFKYVRRPIEDDEQVIRNKCKFGHRRGQTRKSLADIRFDEIKLVQIKEEAVCFDSELDEHIKWFQQEYVKTEKDWREIDKRMSQTLEIRRKMIGSRTPLKDILKLFPFLKCPYQMFREFQLLTRTDIYKKTRHILESYSENILTSFSVVDNPINIVLQEKMKHYTDEDMLKYMKMTATCLLLPDVFGDDPSLFVIMNEQVQVSTPVLEVKNPFNMEVCEFSLYLERERLTKVDDCVTALAALVAAFHVFRIECPRRLSQTFNFLETLIFDMHSPYFPSLKEKENEVGFQHPLT.

One can recognise an SAM domain in the interval 4–71 (WSVEQVCSWL…KYKQNTQGLK (68 aa)). The interval 85-114 (TEAARDYRDEESSSPARHGEQMPSFYPAEN) is disordered.

The polypeptide is Sterile alpha motif domain-containing protein 3 (SAMD3) (Homo sapiens (Human)).